A 462-amino-acid chain; its full sequence is Acetyl-CoA decarbonylase/synthase complex subunit gamma (462 aa).

The 60-residue stretch at 1-60 (MAQLSAMDVYNLLPKANCGACGCKTCMEFATKLVNREAKPEDCPKLDDESLEKLQELLAP) folds into the 4Fe-4S domain. Cysteine 18, cysteine 21, cysteine 26, and cysteine 43 together coordinate [4Fe-4S] cluster.

In terms of assembly, heterodimer of delta and gamma chains. The ACDS complex is made up of alpha, epsilon, beta, gamma and delta chains with a probable stoichiometry of (alpha(2)epsilon(2))(4)-beta(8)-(gamma(1)delta(1))(8). Corrinoid serves as cofactor. Requires [4Fe-4S] cluster as cofactor.

It carries out the reaction 5,6,7,8-tetrahydrosarcinapterin + methyl-Co(III)-[corrinoid Fe-S protein] = 5-methyltetrahydrosarcinapterin + Co(I)-[corrinoid Fe-S protein] + H(+). In terms of biological role, part of a complex that catalyzes the reversible cleavage of acetyl-CoA, allowing autotrophic growth from CO(2). The sequence is that of Acetyl-CoA decarbonylase/synthase complex subunit gamma from Methanopyrus kandleri (strain AV19 / DSM 6324 / JCM 9639 / NBRC 100938).